Reading from the N-terminus, the 127-residue chain is MAKPTRKRRVKKNIESGVAHIHATFNNTIVMITDVHGNALAWSSAGALGFKGSRKSTPFAAQMAAEAAAKSAQEHGLKTVEVTVKGPGSGRESAIRALAAAGLEVTAIRDVTPVPHNGARPPKRRRV.

Belongs to the universal ribosomal protein uS11 family. In terms of assembly, part of the 30S ribosomal subunit. Interacts with proteins S7 and S18. Binds to IF-3.

In terms of biological role, located on the platform of the 30S subunit, it bridges several disparate RNA helices of the 16S rRNA. Forms part of the Shine-Dalgarno cleft in the 70S ribosome. The polypeptide is Small ribosomal subunit protein uS11 (Streptococcus agalactiae serotype Ia (strain ATCC 27591 / A909 / CDC SS700)).